A 253-amino-acid polypeptide reads, in one-letter code: Probable transcriptional regulatory protein RBE_0568 (253 aa).

Residues 1-21 form a disordered region; that stretch reads MAGHSKFKNIQHRKGAQDKKR.

This sequence belongs to the TACO1 family.

The protein resides in the cytoplasm. The protein is Probable transcriptional regulatory protein RBE_0568 of Rickettsia bellii (strain RML369-C).